The primary structure comprises 129 residues: MAREPQRIRRRERKNITAGVAHVNASFNNTMITITDAQGNAIAWSSAGMMGFKGSRKSTPYAAQVAAEDAGKKAAEHGVRTLEVEVKGPGSGRESALRALQAVGFHITSIRDVTPIPHNGVRPSKRRRV.

It belongs to the universal ribosomal protein uS11 family. In terms of assembly, part of the 30S ribosomal subunit. Interacts with proteins S7 and S18. Binds to IF-3.

Located on the platform of the 30S subunit, it bridges several disparate RNA helices of the 16S rRNA. Forms part of the Shine-Dalgarno cleft in the 70S ribosome. This chain is Small ribosomal subunit protein uS11, found in Rhizorhabdus wittichii (strain DSM 6014 / CCUG 31198 / JCM 15750 / NBRC 105917 / EY 4224 / RW1) (Sphingomonas wittichii).